The sequence spans 310 residues: Alpha/beta hydrolase domain-containing protein 17C (310 aa).

Active-site charge relay system residues include serine 192, aspartate 257, and histidine 286.

The protein belongs to the AB hydrolase superfamily. ABHD17 family. Palmitoylated on cysteine residues located in a cysteine cluster at the N-terminus which promotes membrane localization.

It is found in the recycling endosome membrane. Its subcellular location is the cell projection. The protein resides in the dendritic spine. It localises to the postsynaptic density membrane. The catalysed reaction is S-hexadecanoyl-L-cysteinyl-[protein] + H2O = L-cysteinyl-[protein] + hexadecanoate + H(+). In terms of biological role, hydrolyzes fatty acids from S-acylated cysteine residues in proteins. In Xenopus tropicalis (Western clawed frog), this protein is Alpha/beta hydrolase domain-containing protein 17C.